A 308-amino-acid polypeptide reads, in one-letter code: Protoheme IX farnesyltransferase (308 aa).

8 helical membrane-spanning segments follow: residues Val-31–Val-51, Pro-53–Leu-73, His-102–Thr-122, Leu-124–Leu-144, Thr-149–Ser-169, Ala-170–Thr-190, Leu-242–Met-262, and Tyr-288–Leu-308.

Belongs to the UbiA prenyltransferase family. Protoheme IX farnesyltransferase subfamily.

Its subcellular location is the cell membrane. It catalyses the reaction heme b + (2E,6E)-farnesyl diphosphate + H2O = Fe(II)-heme o + diphosphate. It functions in the pathway porphyrin-containing compound metabolism; heme O biosynthesis; heme O from protoheme: step 1/1. Functionally, converts heme B (protoheme IX) to heme O by substitution of the vinyl group on carbon 2 of heme B porphyrin ring with a hydroxyethyl farnesyl side group. The chain is Protoheme IX farnesyltransferase from Mycolicibacterium smegmatis (strain ATCC 700084 / mc(2)155) (Mycobacterium smegmatis).